The primary structure comprises 541 residues: Apolipoprotein N-acyltransferase (541 aa).

The next 6 helical transmembrane spans lie at 21-41 (MSWF…WYSL), 54-74 (LTSL…SWML), 89-109 (VLIS…FFIV), 116-136 (ILWC…YFLC), 157-177 (FGGF…GISF), and 189-209 (YVWL…YEYL). The 282-residue stretch at 219 to 500 (LRVAVIQPAS…PGVLQVSLPM (282 aa)) folds into the CN hydrolase domain. E265 acts as the Proton acceptor in catalysis. K350 is an active-site residue. C405 acts as the Nucleophile in catalysis. The helical transmembrane segment at 506 to 526 (LYAFWGDFPMIFLSLLSIGCI) threads the bilayer.

The protein belongs to the CN hydrolase family. Apolipoprotein N-acyltransferase subfamily.

The protein resides in the cell inner membrane. The enzyme catalyses N-terminal S-1,2-diacyl-sn-glyceryl-L-cysteinyl-[lipoprotein] + a glycerophospholipid = N-acyl-S-1,2-diacyl-sn-glyceryl-L-cysteinyl-[lipoprotein] + a 2-acyl-sn-glycero-3-phospholipid + H(+). The protein operates within protein modification; lipoprotein biosynthesis (N-acyl transfer). Its function is as follows. Catalyzes the phospholipid dependent N-acylation of the N-terminal cysteine of apolipoprotein, the last step in lipoprotein maturation. This chain is Apolipoprotein N-acyltransferase, found in Chlamydia caviae (strain ATCC VR-813 / DSM 19441 / 03DC25 / GPIC) (Chlamydophila caviae).